Reading from the N-terminus, the 548-residue chain is Natural resistance-associated macrophage protein 1 (548 aa).

Residues 1–38 (MPGDMGPPKQGGTRYGSISSPPSPGPQQAPPGGTYLSE) form a disordered region. Residues 1–55 (MPGDMGPPKQGGTRYGSISSPPSPGPQQAPPGGTYLSEKIPIPDTESGAFSLRKL) lie on the Cytoplasmic side of the membrane. A helical transmembrane segment spans residues 56 to 73 (WAFTGPGFLMSIAFLDPG). The Extracellular segment spans residues 74–82 (NIESDLQAG). A helical membrane pass occupies residues 83–102 (AVAGFKLLWVLLWATVLGLL). The Cytoplasmic portion of the chain corresponds to 103 to 139 (CQRLAARLGVVTGKDLGEVCHLYYPKVPRILLWLTIE). Residues 140–160 (LAIVGSDMQEVIGTAIAFSLL) form a helical membrane-spanning segment. Residues 161–164 (SAGR) lie on the Extracellular side of the membrane. Residues 165–184 (IPLWGGVLITIVDTFFFLFL) form a helical membrane-spanning segment. The Cytoplasmic segment spans residues 185–193 (DNYGLRKLE). Residues 194 to 214 (AFFGFLITIMALTFGYEYVVA) traverse the membrane as a helical segment. Residues 215 to 237 (RPAQGALLQGLFLPSCAGCGQPE) are Extracellular-facing. Residues 238–256 (LLQAVGIVGAIIMPHNIYL) traverse the membrane as a helical segment. The Cytoplasmic segment spans residues 257-284 (HSSLVKSREVDRSRRADIREANMYFLIE). Residues 285–304 (ATIALSVSFLINLFVMAVFG) traverse the membrane as a helical segment. Residues 305-346 (QAFYKQTNQAAFNICANSSLHDYATIFPRNNLTVAVDIYQGG) lie on the Extracellular side of the membrane. Asn-321 and Asn-335 each carry an N-linked (GlcNAc...) asparagine glycan. The chain crosses the membrane as a helical span at residues 347–366 (VILGCLFGPAALYIWAVGLL). The Cytoplasmic portion of the chain corresponds to 367 to 397 (AAGQSSTMTGTYAGQFVMEGFLKLRWSRFAR). The chain crosses the membrane as a helical span at residues 398 to 415 (VLLTRSCAILPTVLVAVF). The Extracellular segment spans residues 416 to 426 (RDLRDLSGLND). A helical membrane pass occupies residues 427 to 447 (LLNVLQSLLLPFAVLPILTFT). Residues 448–463 (SMPAVMQEFANGLVSK) are Cytoplasmic-facing. Residues 464–485 (VISSSIMVLVCAVNLYFVISYV) form a helical membrane-spanning segment. At 486 to 493 (PSLPHPDY) the chain is on the extracellular side. The chain crosses the membrane as a helical span at residues 494 to 513 (FSLVALLAAAYLGLTTYLVW). Residues 514-548 (TCLITQGATLLAHSSHQRFLYGLPEEDQENGRTSG) lie on the Cytoplasmic side of the membrane.

The protein belongs to the NRAMP family.

The protein resides in the late endosome membrane. The protein localises to the lysosome membrane. It catalyses the reaction Zn(2+)(in) + H(+)(out) = Zn(2+)(out) + H(+)(in). The enzyme catalyses Fe(2+)(in) + H(+)(out) = Fe(2+)(out) + H(+)(in). It carries out the reaction Mn(2+)(in) + H(+)(out) = Mn(2+)(out) + H(+)(in). In terms of biological role, macrophage-specific antiporter that fluxes metal ions in either direction against a proton gradient. Localized to late endosomal lysosomal membranes, delivers bivalent cations from the cytosol into these acidic compartments where they may directly affect antimicrobial activity. Involved in iron metabolism and host natural resistance to infection with intracellular parasites. Pathogen resistance involves sequestration of Fe(2+) and Mn(2+), cofactors of both prokaryotic and eukaryotic catalases and superoxide dismutases, not only to protect the macrophage against its own generation of reactive oxygen species, but to deny the cations to the pathogen for synthesis of its protective enzymes. The polypeptide is Natural resistance-associated macrophage protein 1 (SLC11A1) (Cervus elaphus (Red deer)).